A 273-amino-acid chain; its full sequence is LDMGHMVNAIGQIDEFVNLGANSIETDVSFDSSANPEYTYHGIPCDCGRNCKKWENFNDFLKGLRSATTPGNSKYKEKLVLVVFDLKTGSLYDNQANDAGKKLAKNLLQHYWNNGNNGGRAYIVLSIPDLNHYPLIKGFTDTLKQEGHPELLDKLGYDFSGNDAIGDVAKAYKKAGVSGHVWQSDGITNCLLRGLTRVKEAVANRDSGNGYINKVYYWTVDKRATTRDALDAGVDGIMTNYPDVITDVLNEAAYKSKFRVATYEDNPWETFKK.

The active site involves His-5. Residues Glu-25 and Asp-27 each coordinate Mg(2+). Residue His-41 is the Nucleophile of the active site. Intrachain disulfides connect Cys-45–Cys-51 and Cys-47–Cys-190. Residue Asp-85 participates in Mg(2+) binding.

It belongs to the arthropod phospholipase D family. Class II subfamily. Requires Mg(2+) as cofactor. As to expression, expressed by the venom gland.

It localises to the secreted. It carries out the reaction an N-(acyl)-sphingosylphosphocholine = an N-(acyl)-sphingosyl-1,3-cyclic phosphate + choline. It catalyses the reaction an N-(acyl)-sphingosylphosphoethanolamine = an N-(acyl)-sphingosyl-1,3-cyclic phosphate + ethanolamine. The enzyme catalyses a 1-acyl-sn-glycero-3-phosphocholine = a 1-acyl-sn-glycero-2,3-cyclic phosphate + choline. The catalysed reaction is a 1-acyl-sn-glycero-3-phosphoethanolamine = a 1-acyl-sn-glycero-2,3-cyclic phosphate + ethanolamine. Its function is as follows. Dermonecrotic toxins cleave the phosphodiester linkage between the phosphate and headgroup of certain phospholipids (sphingolipid and lysolipid substrates), forming an alcohol (often choline) and a cyclic phosphate. This toxin acts on sphingomyelin (SM). It may also act on ceramide phosphoethanolamine (CPE), lysophosphatidylcholine (LPC) and lysophosphatidylethanolamine (LPE), but not on lysophosphatidylserine (LPS), and lysophosphatidylglycerol (LPG). It acts by transphosphatidylation, releasing exclusively cyclic phosphate products as second products. Induces dermonecrosis, hemolysis, increased vascular permeability, edema, inflammatory response, and platelet aggregation. This is Dermonecrotic toxin LhSicTox-alphaIA1i from Loxosceles hirsuta (Recluse spider).